A 324-amino-acid chain; its full sequence is NADH-dependent D-xylose reductase (324 aa).

Tyr54 (proton donor) is an active-site residue. His116 is a binding site for substrate. 220–286 (SSFGPQSFLE…SNSPDRMAQN (67 aa)) contacts NAD(+).

The protein belongs to the aldo/keto reductase family.

It carries out the reaction xylitol + NAD(+) = D-xylose + NADH + H(+). The catalysed reaction is xylitol + NADP(+) = D-xylose + NADPH + H(+). It functions in the pathway carbohydrate metabolism; D-xylose degradation. Its function is as follows. Reduces D-xylose into xylitol. Preferentially utilizes NADH as a cosubstrate. The polypeptide is NADH-dependent D-xylose reductase (XYL1) (Candida parapsilosis (Yeast)).